We begin with the raw amino-acid sequence, 304 residues long: Ornithine carbamoyltransferase (304 aa).

Residues 51–54 (STRT), Gln78, Arg102, and 129–132 (HPVQ) each bind carbamoyl phosphate. L-ornithine contacts are provided by residues Asn157, Asp221, and 225–226 (SM). Residues 261–262 (CL) and Arg289 contribute to the carbamoyl phosphate site.

This sequence belongs to the aspartate/ornithine carbamoyltransferase superfamily. OTCase family.

Its subcellular location is the cytoplasm. The enzyme catalyses carbamoyl phosphate + L-ornithine = L-citrulline + phosphate + H(+). It participates in amino-acid degradation; L-arginine degradation via ADI pathway; carbamoyl phosphate from L-arginine: step 2/2. Reversibly catalyzes the transfer of the carbamoyl group from carbamoyl phosphate (CP) to the N(epsilon) atom of ornithine (ORN) to produce L-citrulline. This chain is Ornithine carbamoyltransferase, found in Campylobacter curvus (strain 525.92).